A 77-amino-acid polypeptide reads, in one-letter code: U8-hexatoxin-Mg1a (77 aa).

The signal sequence occupies residues Met1–Ala22. The propeptide occupies Tyr23–Arg43. Disulfide bonds link Cys46–Cys60, Cys53–Cys65, and Cys59–Cys76.

As to expression, expressed by the venom gland.

The protein localises to the secreted. Intrathorax injection into crickets causes paralysis prolonged for more than 60 minutes, followed by recovery. This chain is U8-hexatoxin-Mg1a, found in Macrothele gigas (Japanese funnel web spider).